Consider the following 336-residue polypeptide: Eukaryotic translation initiation factor 3 subunit I (336 aa).

WD repeat units follow at residues 8 to 47 (GHER…RLGT), 50 to 91 (GHLG…KVWE), 146 to 185 (CNES…QLEN), 190 to 229 (EFDH…ILKT), and 287 to 326 (GHFG…FDFM).

The protein belongs to the eIF-3 subunit I family. Component of the eukaryotic translation initiation factor 3 (eIF-3) complex.

It is found in the cytoplasm. Functionally, component of the eukaryotic translation initiation factor 3 (eIF-3) complex, which is involved in protein synthesis of a specialized repertoire of mRNAs and, together with other initiation factors, stimulates binding of mRNA and methionyl-tRNAi to the 40S ribosome. The eIF-3 complex specifically targets and initiates translation of a subset of mRNAs involved in cell proliferation. This chain is Eukaryotic translation initiation factor 3 subunit I (tif34), found in Aspergillus terreus (strain NIH 2624 / FGSC A1156).